The following is a 303-amino-acid chain: Polyisoprenyl-teichoic acid--peptidoglycan teichoic acid transferase TagU (303 aa).

Topologically, residues Met1–Lys4 are cytoplasmic. Residues Ile5–Tyr25 form a helical; Signal-anchor for type II membrane protein membrane-spanning segment. Over Asn26–Lys303 the chain is Extracellular.

It belongs to the LytR/CpsA/Psr (LCP) family.

It is found in the cell membrane. It participates in cell wall biogenesis. In terms of biological role, may catalyze the final step in cell wall teichoic acid biosynthesis, the transfer of the anionic cell wall polymers (APs) from their lipid-linked precursor to the cell wall peptidoglycan (PG). This is Polyisoprenyl-teichoic acid--peptidoglycan teichoic acid transferase TagU from Bacillus cereus (strain ZK / E33L).